The sequence spans 137 residues: Large ribosomal subunit protein uL16 (137 aa).

It belongs to the universal ribosomal protein uL16 family. As to quaternary structure, part of the 50S ribosomal subunit.

In terms of biological role, binds 23S rRNA and is also seen to make contacts with the A and possibly P site tRNAs. This Pseudomonas entomophila (strain L48) protein is Large ribosomal subunit protein uL16.